The primary structure comprises 152 residues: Deoxyuridine 5'-triphosphate nucleotidohydrolase (152 aa).

Residues 71–73, Asn84, 88–90, and Met98 contribute to the substrate site; these read RSG and LID.

It belongs to the dUTPase family. Mg(2+) serves as cofactor.

The catalysed reaction is dUTP + H2O = dUMP + diphosphate + H(+). It functions in the pathway pyrimidine metabolism; dUMP biosynthesis; dUMP from dCTP (dUTP route): step 2/2. This enzyme is involved in nucleotide metabolism: it produces dUMP, the immediate precursor of thymidine nucleotides and it decreases the intracellular concentration of dUTP so that uracil cannot be incorporated into DNA. The polypeptide is Deoxyuridine 5'-triphosphate nucleotidohydrolase (Photorhabdus laumondii subsp. laumondii (strain DSM 15139 / CIP 105565 / TT01) (Photorhabdus luminescens subsp. laumondii)).